The chain runs to 103 residues: Small ribosomal subunit protein uS10 (103 aa).

Residues 35–59 are disordered; sequence LSGPVPLPTKTLEVPSRKSPDGEGT.

Belongs to the universal ribosomal protein uS10 family. In terms of assembly, part of the 30S ribosomal subunit.

Its function is as follows. Involved in the binding of tRNA to the ribosomes. In Haloarcula marismortui (strain ATCC 43049 / DSM 3752 / JCM 8966 / VKM B-1809) (Halobacterium marismortui), this protein is Small ribosomal subunit protein uS10 (rps10).